We begin with the raw amino-acid sequence, 209 residues long: Ribosomal RNA large subunit methyltransferase E (209 aa).

The S-adenosyl-L-methionine site is built by Gly60, Trp62, Asp80, Asp96, and Asp121. Lys161 (proton acceptor) is an active-site residue. Residues 182 to 196 show a composition bias toward basic and acidic residues; the sequence is VQMRKPSSSRDRSRE. The tract at residues 182–209 is disordered; it reads VQMRKPSSSRDRSREQYLLGRGFRGRSE.

The protein belongs to the class I-like SAM-binding methyltransferase superfamily. RNA methyltransferase RlmE family.

The protein localises to the cytoplasm. The enzyme catalyses uridine(2552) in 23S rRNA + S-adenosyl-L-methionine = 2'-O-methyluridine(2552) in 23S rRNA + S-adenosyl-L-homocysteine + H(+). Specifically methylates the uridine in position 2552 of 23S rRNA at the 2'-O position of the ribose in the fully assembled 50S ribosomal subunit. This is Ribosomal RNA large subunit methyltransferase E from Pseudomonas fluorescens (strain ATCC BAA-477 / NRRL B-23932 / Pf-5).